A 357-amino-acid polypeptide reads, in one-letter code: Ribosomal RNA small subunit methyltransferase C (357 aa).

Belongs to the methyltransferase superfamily. RsmC family. Monomer.

The protein localises to the cytoplasm. It carries out the reaction guanosine(1207) in 16S rRNA + S-adenosyl-L-methionine = N(2)-methylguanosine(1207) in 16S rRNA + S-adenosyl-L-homocysteine + H(+). Functionally, specifically methylates the guanine in position 1207 of 16S rRNA in the 30S particle. The chain is Ribosomal RNA small subunit methyltransferase C from Colwellia psychrerythraea (strain 34H / ATCC BAA-681) (Vibrio psychroerythus).